Here is a 65-residue protein sequence, read N- to C-terminus: MNGRLLEIVACPICQGRLKYDSENEQLICHFDHIAYPIKQGIPILLSDQAIGLSTSLTNPEQQNQ.

The protein belongs to the UPF0434 family.

This Histophilus somni (strain 2336) (Haemophilus somnus) protein is UPF0434 protein HSM_0997.